The sequence spans 508 residues: Bestrophin-2 (508 aa).

Topologically, residues 1 to 31 (MTVTYTARVANARFGGFSQLLLLWRGSIYKL) are cytoplasmic. Residue A10 participates in Ca(2+) binding. The chain crosses the membrane as a helical span at residues 32–51 (LWRELLCFLGLYMALSAAYR). Residues 52 to 60 (FLLAEEQKR) lie on the Extracellular side of the membrane. Residues 61–82 (YFEKLVIYCDQYASLIPVSFVL) form a helical membrane-spanning segment. At 83 to 238 (GFYVTLVVHR…WISIPLVYTQ (156 aa)) the chain is on the cytoplasmic side. Residues 239-255 (VVTIAVYSYFLACLIGR) form a helical membrane-spanning segment. Residues 256-274 (QFLDPAQGYKDHTLDLCVP) lie on the Extracellular side of the membrane. The chain crosses the membrane as a helical span at residues 275–288 (IFTLLQFFFYAGWL). The Cytoplasmic segment spans residues 289 to 508 (KVAEQLINPF…PIGEEEESPA (220 aa)). Ca(2+)-binding residues include Q293, N296, D301, and D304. The interval 455 to 508 (LREPELEPPACPEPPAPIPGPTPEPFTTVSIPGPRAPAPPWLPSPIGEEEESPA) is disordered. 2 stretches are compositionally biased toward pro residues: residues 461–478 (EPPACPEPPAPIPGPTPE) and 488–497 (PRAPAPPWLP).

It belongs to the anion channel-forming bestrophin (TC 1.A.46) family. Calcium-sensitive chloride channel subfamily. As to quaternary structure, pentamer. Interacts with GLUL; this interaction tethers a fraction of GLUL to the membrane, causing a decrease of cytosolic glutamine synthase (GS) activity and inhibits the chloride channel activity of BEST2 by affecting the gating at the aperture in the absence of intracellular glutamate. As to expression, expressed in mucin-secreting colonic goblet cells.

The protein resides in the cell membrane. The protein localises to the basolateral cell membrane. The catalysed reaction is chloride(in) = chloride(out). It carries out the reaction hydrogencarbonate(in) = hydrogencarbonate(out). The enzyme catalyses L-glutamate(out) = L-glutamate(in). It catalyses the reaction iodide(out) = iodide(in). The catalysed reaction is L-glutamine(out) = L-glutamine(in). Its activity is regulated as follows. Chloride channel activity is allosterically inhibited by GLUL/glutamine synthase (GS) which affects the gating at the aperture in the absence of intracellular glutamate. Inhibitory effect of GLUL is relieved upon increasing of intracellular level of L-glutamate. Its function is as follows. Ligand-gated anion channel that allows the movement of anions across cell membranes when activated by calcium (Ca2+). Transports a large specter of anions, namely mediates the movement of chloride, L-glutamate and iodide. Calcium-binding triggers the dilation of the aperture, but calcium-dependent gating is only effective when the size of the passing anion is bigger than the closed aperture. Mediates the calcium-activated hydrogencarbonate movement and participates in colonic hydrogencarbonate secretion concomitant with mucin secretion. In non-pigmented epithelium (NPE), mediates the efflux of intracellular L-glutamate; binding of intracellular L-glutamate activates and open both the neck and the aperture of the channel, leading to L-glutamate exit promoting chloride influx movement from the extracellular side in trans. Also exhibits a directional permeability for intracellular glutamine, in a similar manner as for L-glutamate. The chain is Bestrophin-2 from Mus musculus (Mouse).